The chain runs to 370 residues: 4-hydroxy-3-methylbut-2-en-1-yl diphosphate synthase (flavodoxin) (370 aa).

Residues Cys-268, Cys-271, Cys-303, and Glu-310 each coordinate [4Fe-4S] cluster.

It belongs to the IspG family. Requires [4Fe-4S] cluster as cofactor.

It catalyses the reaction (2E)-4-hydroxy-3-methylbut-2-enyl diphosphate + oxidized [flavodoxin] + H2O + 2 H(+) = 2-C-methyl-D-erythritol 2,4-cyclic diphosphate + reduced [flavodoxin]. The protein operates within isoprenoid biosynthesis; isopentenyl diphosphate biosynthesis via DXP pathway; isopentenyl diphosphate from 1-deoxy-D-xylulose 5-phosphate: step 5/6. In terms of biological role, converts 2C-methyl-D-erythritol 2,4-cyclodiphosphate (ME-2,4cPP) into 1-hydroxy-2-methyl-2-(E)-butenyl 4-diphosphate. This chain is 4-hydroxy-3-methylbut-2-en-1-yl diphosphate synthase (flavodoxin), found in Bacillus licheniformis (strain ATCC 14580 / DSM 13 / JCM 2505 / CCUG 7422 / NBRC 12200 / NCIMB 9375 / NCTC 10341 / NRRL NRS-1264 / Gibson 46).